A 509-amino-acid polypeptide reads, in one-letter code: Maturase K (509 aa).

This sequence belongs to the intron maturase 2 family. MatK subfamily.

It localises to the plastid. Its subcellular location is the chloroplast. In terms of biological role, usually encoded in the trnK tRNA gene intron. Probably assists in splicing its own and other chloroplast group II introns. This Nicotiana clevelandii (Wild tobacco) protein is Maturase K.